The primary structure comprises 346 residues: Low specificity L-threonine aldolase (346 aa).

Lys-207 bears the N6-(pyridoxal phosphate)lysine mark.

Belongs to the threonine aldolase family. In terms of assembly, homotetramer. It depends on pyridoxal 5'-phosphate as a cofactor.

The catalysed reaction is L-threonine = acetaldehyde + glycine. The enzyme catalyses L-allo-threonine = acetaldehyde + glycine. Functionally, catalyzes the cleavage of L-allo-threonine and L-threonine to glycine and acetaldehyde. Can also act on L-erythro-phenylserine, L-threo-phenylserine, L-beta-3,4-methylenedioxyphenylserine and L-beta-3,4-dihydroxyphenylserine. This chain is Low specificity L-threonine aldolase (ltaE), found in Pseudomonas sp. (strain NCIMB 10558).